We begin with the raw amino-acid sequence, 439 residues long: Lipid-A-disaccharide synthase (439 aa).

Belongs to the LpxB family.

The catalysed reaction is a lipid X + a UDP-2-N,3-O-bis[(3R)-3-hydroxyacyl]-alpha-D-glucosamine = a lipid A disaccharide + UDP + H(+). It participates in bacterial outer membrane biogenesis; LPS lipid A biosynthesis. In terms of biological role, condensation of UDP-2,3-diacylglucosamine and 2,3-diacylglucosamine-1-phosphate to form lipid A disaccharide, a precursor of lipid A, a phosphorylated glycolipid that anchors the lipopolysaccharide to the outer membrane of the cell. The protein is Lipid-A-disaccharide synthase of Xanthomonas axonopodis pv. citri (strain 306).